The following is a 112-amino-acid chain: UPF0329 protein ECU11_0080 (112 aa).

This sequence belongs to the UPF0329 family.

This is UPF0329 protein ECU11_0080 from Encephalitozoon cuniculi (strain GB-M1) (Microsporidian parasite).